The chain runs to 238 residues: MAADGQCSLPASWRPVTLTHVEYPAGDLSGHLLAYLSLGPVFVIVGFVTLIIFKRELHTISFLGGLALNEGVNWLIKNVIQEPRPCGGPHTAVGTKYGMPSSHSQFMWFFSVYSFLFLYLRMHQTNNARFLDLLWRHVLSLGLLAAAFLVSYSRVYLLYHTWSQVLYGGIAGGLMAVAWFIFTQEVLTPLFPRIAAWPISEFFLIRDTSLIPNVLWFEYTVTRAEARNRQRKLGTKLQ.

4 consecutive transmembrane segments (helical) span residues Leu-33–Phe-53, Pro-100–Leu-120, Phe-130–Val-150, and Trp-162–Phe-182.

The protein belongs to the dolichyldiphosphatase family.

The protein localises to the endoplasmic reticulum membrane. It carries out the reaction a di-trans,poly-cis-dolichyl diphosphate + H2O = a di-trans,poly-cis-dolichyl phosphate + phosphate + H(+). Its pathway is protein modification; protein glycosylation. Required for efficient N-glycosylation. Necessary for maintaining optimal levels of dolichol-linked oligosaccharides. Hydrolyzes dolichyl pyrophosphate at a very high rate and dolichyl monophosphate at a much lower rate. Does not act on phosphatidate. The protein is Dolichyldiphosphatase 1 (DOLPP1) of Plecturocebus moloch (Dusky titi monkey).